Consider the following 309-residue polypeptide: Aspartate carbamoyltransferase catalytic subunit (309 aa).

Carbamoyl phosphate-binding residues include Arg-49 and Thr-50. Lys-77 is a binding site for L-aspartate. 3 residues coordinate carbamoyl phosphate: Arg-99, His-127, and Gln-130. Residues Arg-160 and Arg-211 each coordinate L-aspartate. Carbamoyl phosphate-binding residues include Ala-252 and Pro-253.

This sequence belongs to the aspartate/ornithine carbamoyltransferase superfamily. ATCase family. In terms of assembly, heterododecamer (2C3:3R2) of six catalytic PyrB chains organized as two trimers (C3), and six regulatory PyrI chains organized as three dimers (R2).

It catalyses the reaction carbamoyl phosphate + L-aspartate = N-carbamoyl-L-aspartate + phosphate + H(+). The protein operates within pyrimidine metabolism; UMP biosynthesis via de novo pathway; (S)-dihydroorotate from bicarbonate: step 2/3. In terms of biological role, catalyzes the condensation of carbamoyl phosphate and aspartate to form carbamoyl aspartate and inorganic phosphate, the committed step in the de novo pyrimidine nucleotide biosynthesis pathway. In Geobacillus sp. (strain WCH70), this protein is Aspartate carbamoyltransferase catalytic subunit.